The sequence spans 455 residues: uncharacterized protein (455 aa).

The signal sequence occupies residues 1 to 27 (MSQRQQFQFLLSFLILIFLKFIIQIRC). Residues 29–434 (ESNGVIIIKN…GDDENLINSS (406 aa)) are Extracellular-facing. Residues N136, N148, N210, and N298 are each glycosylated (N-linked (GlcNAc...) asparagine). Residues 383–402 (SSSTTSTTSSSSSSSSSTTT) form a disordered region. 2 N-linked (GlcNAc...) asparagine glycosylation sites follow: N421 and N432. Residues 435–455 (SVIKFSTPIIMIIIILINIKF) traverse the membrane as a helical segment.

Its subcellular location is the membrane. This is an uncharacterized protein from Dictyostelium discoideum (Social amoeba).